Reading from the N-terminus, the 487-residue chain is Keratin, type I cytoskeletal 12 (487 aa).

A head region spans residues Met-1–Ser-118. Positions Glu-119–Trp-154 are coil 1A. An IF rod domain is found at Glu-119 to Asp-433. A linker 1 region spans residues Arg-158–Leu-175. A coil 1B region spans residues Ile-176–Phe-267. The tract at residues Gln-268–Val-290 is linker 12. Positions Leu-291 to Gly-428 are coil 2. The segment at Gly-428 to Arg-461 is disordered. Residues Asp-429–Met-487 are tail. The span at Glu-437–Asp-452 shows a compositional bias: polar residues.

It belongs to the intermediate filament family. Heterotetramer of two type I and two type II keratins. Keratin-3 associates with keratin-12. Expressed in the corneal epithelium (at protein level). Also expressed in the suprabasal limbal epithelium of the cornea (at protein level).

Functionally, involved in corneal epithelium organization, integrity and corneal keratin expression. This chain is Keratin, type I cytoskeletal 12 (Krt12), found in Mus musculus (Mouse).